The sequence spans 671 residues: Palmitoleoyl-protein carboxylesterase NOTUM (671 aa).

Residues 1–46 (MAVEQIDKMAAKAGEATNKWIKPQQPLLTLLLLLATFSQLPAVCSS) form the signal peptide. Residue Asn-95 is glycosylated (N-linked (GlcNAc...) asparagine). Catalysis depends on charge relay system residues Ser-237 and Asp-338. The N-linked (GlcNAc...) asparagine glycan is linked to Asn-372. His-384 acts as the Charge relay system in catalysis. The disordered stretch occupies residues 411–592 (HSTRSRRHDK…TKSKKRHRVP (182 aa)). Over residues 439–454 (NQRHQRHRQRLQRQKH) the composition is skewed to basic residues. The segment covering 470-486 (LSKEEREERKRLRQEQR) has biased composition (basic and acidic residues). The span at 487–497 (QRRKQRRRQQQ) shows a compositional bias: basic residues. Basic and acidic residues predominate over residues 505–514 (QEHRNKKDNS). A compositionally biased stretch (polar residues) spans 570 to 583 (PQKTRSSNNASAGT). Asn-578 and Asn-612 each carry an N-linked (GlcNAc...) asparagine glycan.

Belongs to the pectinacetylesterase family. Notum subfamily.

It is found in the secreted. Its subcellular location is the cell surface. It carries out the reaction [Wnt protein]-O-(9Z)-hexadecenoyl-L-serine + H2O = [Wnt protein]-L-serine + (9Z)-hexadecenoate + H(+). Carboxylesterase that acts as a key negative regulator of the Wnt signaling pathway by specifically mediating depalmitoleoylation of WNT proteins. Serine palmitoleoylation of WNT proteins is required for efficient binding to frizzled receptors. Also acts as a regulator of long-range activity of Hedgehog (hh), possibly by regulating the switch between low and high level hh pathway signaling. This is Palmitoleoyl-protein carboxylesterase NOTUM from Drosophila melanogaster (Fruit fly).